The primary structure comprises 167 residues: MEKVVDLFGVGEANSQKLLEGGKDLSEIQQGLFIGSVAEANNKDFLKSSNITHVLTVAVALAPPYPDDFVYKVIEVVDRSETDLTVYFDECYSFIDQAIQSGGGVLVHCFMGMSRSVTIVVAYLMKKHGMGFSKAMELVRSRRHQAYPNPGFISQLQQFEKSIQGNA.

Positions D24–G165 constitute a Tyrosine-protein phosphatase domain. C109 acts as the Phosphocysteine intermediate in catalysis.

Belongs to the protein-tyrosine phosphatase family. Non-receptor class dual specificity subfamily. As to quaternary structure, associates with MPK3 and MPK6. Interacts with MPK6 is promoted during HR-like responses triggered by fungal elicitors, whereas interaction with MPK3 in repressed. As to expression, expressed in flowers, seedlings, roots, leaves, and seeds. Present in stomata and meristematic cells.

The protein localises to the nucleus. The protein resides in the cytoplasm. It catalyses the reaction O-phospho-L-tyrosyl-[protein] + H2O = L-tyrosyl-[protein] + phosphate. The catalysed reaction is O-phospho-L-seryl-[protein] + H2O = L-seryl-[protein] + phosphate. It carries out the reaction O-phospho-L-threonyl-[protein] + H2O = L-threonyl-[protein] + phosphate. Has a dual specificity toward Ser/Thr and Tyr-containing proteins. Prevents biotic and abiotic stress responses, including ozone, oxidative stress and pathogen attacks; represses MAPK activities during hypersensitive response to limit the spread of the HR response after infection by necrotrophic pathogen such as Botrytis cinerea. May be also involved in ABA and salt responses. Dephosphorylates MPK3 and MPK6. The polypeptide is Dual specificity protein phosphatase 1B (DSPTP1B) (Arabidopsis thaliana (Mouse-ear cress)).